The following is a 530-amino-acid chain: White collar 2 protein (530 aa).

A run of 7 repeats spans residues 9–12 (GSSM), 21–24 (GSGM), 25–28 (GSGM), 29–32 (GSGM), 33–36 (GTGM), 37–40 (GTGM), and 41–44 (GTGM). Positions 9–44 (GSSMYGFGAMGMGSGMGSGMGSGMGTGMGTGMGTGM) are 7 X 4 AA repeats of G-[SAT]-G-M. Positions 134–158 (IATPTTTTSGPSGGPSSGGGSTLTE) are disordered. The segment covering 144 to 154 (PSGGPSSGGGS) has biased composition (gly residues). Positions 162–232 (RRNWPAKVVE…AELNEAIATG (71 aa)) constitute a PAS domain. Residues 315 to 343 (REEQEEQEESHRTWRMSQEGRSDVTPSDD) are disordered. The GATA-type zinc-finger motif lies at 468 to 493 (CTDCGTLDSPEWRKGPSGPKTLCNAC). The tract at residues 504 to 530 (KNANNNNNGGGIGGHNDIHTPMGDHMG) is disordered.

Heterodimer of wc-1 and wc-2 (Potential). Binds to DNA.

Its subcellular location is the nucleus. In terms of biological role, may function as a transcription factor involved in light regulation. Binds and affects blue light regulation of the al-3 gene. Wc-1 and wc-2 interact via homologous PAS domains, bind to promoters of light regulated genes such as frq, and activate transcription. May bind directly to frq. In Neurospora crassa (strain ATCC 24698 / 74-OR23-1A / CBS 708.71 / DSM 1257 / FGSC 987), this protein is White collar 2 protein (wc-2).